An 834-amino-acid polypeptide reads, in one-letter code: Enhancer of filamentation 1 (834 aa).

An SH3 domain is found at 3-65 (ARNLMARALY…PGNRVKLLIG (63 aa)). Phosphotyrosine is present on residues tyrosine 92, tyrosine 164, tyrosine 166, tyrosine 177, tyrosine 189, tyrosine 214, and tyrosine 223. At serine 296 the chain carries Phosphoserine. At tyrosine 317 the chain carries Phosphotyrosine. Disordered stretches follow at residues 328-402 (PPAE…DKRL) and 584-624 (SQMP…SERS). Residues 332–344 (TSEKANPEERDGV) are compositionally biased toward basic and acidic residues. Positions 360 to 363 (DVVD) match the Caspase cleavage related site motif. The segment covering 368 to 397 (LSFSSTGSTRSNMSTSSTTSKESSVSASPS) has biased composition (low complexity). Serine 369 bears the Phosphoserine mark. The interval 710-760 (FYYDQCETHYISLLNAIDALFSCVSSAQPPRIFVAHSKFVILSAHKLVFIG) is divergent helix-loop-helix motif. The required for interaction with PLK1 stretch occupies residues 710–834 (FYYDQCETHY…KRSLLEMATF (125 aa)). Phosphoserine is present on serine 780. Phosphothreonine is present on threonine 804.

Belongs to the CAS family. Homodimer. Forms heterodimers with BCAR1/p130cas. Forms complexes with PTK2B/RAFTK, adapter protein CRKL and LYN kinase. Part of a complex composed of NEDD9, AURKA and CTTN; within the complex NEDD9 acts as a scaffold protein and is required for complex formation. Part of a ternary complex composed of SMAD3, ITCH/AIP4 and NEDD9/HEF1; within the complex NEDD9/HEF1 interacts (via N-terminus) with ITCH/AIP4; the complex mediates ubiquitination and proteasomal degradation of NEDD9/HEF1. Interacts with ID2. Interacts with CTTN (via N-terminus). Interacts with MICAL. Interacts with TXNL4/DIM1. Interacts with BCAR3 (via Ras-GEF domain). Interacts with SH2D3C isoform 1 and isoform 2. Interacts with BCAR3. Interacts with ECT2. Interacts with PTPN11/SHP-2 (via SH2 domains); the interaction is enhanced when NEDD9/CAS-L is tyrosine phosphorylated. Interacts (via C-terminus) with PLK1 (via polo box domain). Interacts with NKX2-5. Interacts with SMAD3; the interaction is inhibited by oxidation of NEDD9. Interacts with ABL1; interaction is induced by CXCL12-mediated phosphorylation of NEDD/HEF1. Interacts (via SH3 domain) with PTK2/FAK. Interacts with FYN; in the presence of PTK2. Interacts with INPPL1/SHIP2. Post-translationally, polyubiquitinated by ITCH/AIP4, leading to proteasomal degradation. PTK2/FAK1 phosphorylates the protein at the YDYVHL motif (conserved among all cas proteins) following integrin stimulation. The SRC family kinases (FYN, SRC, LCK and CRK) are recruited to the phosphorylated sites and can phosphorylate other tyrosine residues. Ligation of either integrin beta-1 or B-cell antigen receptor on tonsillar B-cells and B-cell lines promotes tyrosine phosphorylation and both integrin and BCR-mediated tyrosine phosphorylation requires an intact actin network. Phosphorylation is required to recruit NEDD9 to T-cell receptor microclusters at the periphery of newly formed immunological synapses. In fibroblasts transformation with oncogene v-ABL results in an increase in tyrosine phosphorylation. Transiently phosphorylated following CD3 cross-linking and this phosphorylated form binds to CRKL and C3G. A mutant lacking the SH3 domain is phosphorylated upon CD3 cross-linking but not upon integrin beta-1 cross-linking. Tyrosine phosphorylation occurs upon stimulation of the G-protein coupled C1a calcitonin receptor. Calcitonin-stimulated tyrosine phosphorylation is mediated by calcium- and protein kinase C-dependent mechanisms and requires the integrity of the actin cytoskeleton. Phosphorylation at Ser-369 induces proteasomal degradation. Phosphorylated by LYN. Phosphorylation at Ser-780 by CSNK1D or CSNK1E, or phosphorylation of Thr-804 by CSNK1E enhances the interaction of NEDD9 with PLK1.

The protein localises to the cytoplasm. Its subcellular location is the cell cortex. It localises to the nucleus. The protein resides in the golgi apparatus. It is found in the cell projection. The protein localises to the lamellipodium. Its subcellular location is the cell junction. It localises to the focal adhesion. The protein resides in the cytoskeleton. It is found in the spindle pole. The protein localises to the cilium. Its subcellular location is the cilium basal body. It localises to the basolateral cell membrane. Functionally, negatively regulates embryonic fibroblast migration. May play an important role in integrin beta-1 or B cell antigen receptor (BCR) mediated signaling in B- and T-cells. Integrin beta-1 stimulation leads to recruitment of various proteins including CRKl and SHPTP2 to the tyrosine phosphorylated form. Promotes adhesion and migration of lymphocytes; as a result required for the correct migration of lymphocytes to the spleen and other secondary lymphoid organs. Plays a role in the organization of T-cell F-actin cortical cytoskeleton and the centralization of T-cell receptor microclusters at the immunological synapse. Negatively regulates cilia outgrowth in polarized cysts. Modulates cilia disassembly via activation of AURKA-mediated phosphorylation of HDAC6 and subsequent deacetylation of alpha-tubulin. In conjunction with NKX2-5, positively regulates transcription of genes such as COL3A1 and MMP2, resulting in increased pulmonary endothelial fibrosis in response to hypoxia. Positively regulates RANKL-induced osteoclastogenesis. Required for the maintenance of hippocampal dendritic spines in the dentate gyrus and CA1 regions, thereby involved in spatial learning and memory. The sequence is that of Enhancer of filamentation 1 from Canis lupus familiaris (Dog).